A 334-amino-acid polypeptide reads, in one-letter code: Aspartate carbamoyltransferase catalytic subunit (334 aa).

The carbamoyl phosphate site is built by R71 and T72. K99 contacts L-aspartate. R121, H151, and Q154 together coordinate carbamoyl phosphate. L-aspartate contacts are provided by R184 and R239. Carbamoyl phosphate-binding residues include G280 and P281.

Belongs to the aspartate/ornithine carbamoyltransferase superfamily. ATCase family. Heterododecamer (2C3:3R2) of six catalytic PyrB chains organized as two trimers (C3), and six regulatory PyrI chains organized as three dimers (R2).

It catalyses the reaction carbamoyl phosphate + L-aspartate = N-carbamoyl-L-aspartate + phosphate + H(+). It functions in the pathway pyrimidine metabolism; UMP biosynthesis via de novo pathway; (S)-dihydroorotate from bicarbonate: step 2/3. In terms of biological role, catalyzes the condensation of carbamoyl phosphate and aspartate to form carbamoyl aspartate and inorganic phosphate, the committed step in the de novo pyrimidine nucleotide biosynthesis pathway. The sequence is that of Aspartate carbamoyltransferase catalytic subunit from Pseudomonas putida (strain GB-1).